The following is a 59-amino-acid chain: MNTNMSGGRRSMPKRKVKTYQQLIQENKEAIMGNPKLMNVIYDRIDRKHQKNLQEQNNT.

This is an uncharacterized protein from Bacillus subtilis (strain 168).